We begin with the raw amino-acid sequence, 271 residues long: Calretinin (271 aa).

EF-hand domains are found at residues 16 to 51, 63 to 98, 107 to 142, 151 to 186, 195 to 230, and 235 to 270; these read LTAS…LEKA, NFGE…EENF, GSSA…LLKK, KLQE…QENF, LTSE…LYEK, and MNIQ…SEPP. Residues aspartate 29, aspartate 31, asparagine 33, tyrosine 35, glutamate 40, aspartate 76, asparagine 78, aspartate 80, lysine 82, glutamate 87, aspartate 120, aspartate 122, serine 124, tyrosine 126, glutamate 131, aspartate 164, asparagine 166, aspartate 168, lysine 170, glutamate 175, aspartate 208, aspartate 210, serine 212, tyrosine 214, and glutamate 219 each coordinate Ca(2+). Tyrosine 214 carries the post-translational modification Phosphotyrosine.

The protein belongs to the calbindin family. As to expression, widely expressed in central nervous system. Expressed in type I unipolar brush cells of the cerebellum (at protein level).

The protein resides in the synapse. It is found in the cell projection. Its subcellular location is the dendrite. Calcium-binding protein involved in calcium homeostasis and signal transduction. It plays a critical role in buffering intracellular calcium levels and modulating calcium-dependent signaling pathways. Predominantly expressed in specific neuronal populations, influences synaptic plasticity and neuronal excitability, contributing to learning and memory. During embryonic development, it facilitates neuronal differentiation and maturation. This is Calretinin (Calb2) from Mus musculus (Mouse).